A 764-amino-acid polypeptide reads, in one-letter code: 5-methyltetrahydropteroyltriglutamate--homocysteine methyltransferase (764 aa).

Residues 16–19 (RELK) and lysine 115 contribute to the 5-methyltetrahydropteroyltri-L-glutamate site. Residues 435–437 (IGS) and glutamate 488 each bind L-homocysteine. L-methionine is bound by residues 435 to 437 (IGS) and glutamate 488. 5-methyltetrahydropteroyltri-L-glutamate is bound by residues 519-520 (RC) and tryptophan 565. Aspartate 603 contributes to the L-homocysteine binding site. Aspartate 603 serves as a coordination point for L-methionine. Glutamate 609 contributes to the 5-methyltetrahydropteroyltri-L-glutamate binding site. Zn(2+)-binding residues include histidine 645, cysteine 647, and glutamate 669. Histidine 698 (proton donor) is an active-site residue. Cysteine 730 is a Zn(2+) binding site.

It belongs to the vitamin-B12 independent methionine synthase family. Zn(2+) is required as a cofactor.

The enzyme catalyses 5-methyltetrahydropteroyltri-L-glutamate + L-homocysteine = tetrahydropteroyltri-L-glutamate + L-methionine. It participates in amino-acid biosynthesis; L-methionine biosynthesis via de novo pathway; L-methionine from L-homocysteine (MetE route): step 1/1. Functionally, catalyzes the transfer of a methyl group from 5-methyltetrahydrofolate to homocysteine resulting in methionine formation. The polypeptide is 5-methyltetrahydropteroyltriglutamate--homocysteine methyltransferase (Burkholderia pseudomallei (strain K96243)).